The sequence spans 102 residues: Small ribosomal subunit protein uS10 (102 aa).

It belongs to the universal ribosomal protein uS10 family. Part of the 30S ribosomal subunit.

Involved in the binding of tRNA to the ribosomes. The polypeptide is Small ribosomal subunit protein uS10 (Lacticaseibacillus casei (strain BL23) (Lactobacillus casei)).